The following is a 94-amino-acid chain: uncharacterized protein (94 aa).

Positions 33–42 (INSLPTFTKP) are enriched in polar residues. Positions 33–57 (INSLPTFTKPNDSNNNVNKSSNDGV) are disordered. The span at 43–57 (NDSNNNVNKSSNDGV) shows a compositional bias: low complexity.

This is an uncharacterized protein from Dictyostelium discoideum (Social amoeba).